A 334-amino-acid polypeptide reads, in one-letter code: Guanine nucleotide-binding protein subunit beta-like protein (334 aa).

6 WD repeats span residues 14–55 (GHKD…DSEF), 65–104 (GHSK…SILL), 106–145 (GHGR…VLKM), 152–192 (MHRG…HLQT), 215–256 (DESK…QSFD), and 257–294 (AIVP…VIAS).

This sequence belongs to the WD repeat G protein beta family.

The protein is Guanine nucleotide-binding protein subunit beta-like protein of Encephalitozoon cuniculi (strain GB-M1) (Microsporidian parasite).